Reading from the N-terminus, the 413-residue chain is Intracellular hyaluronan-binding protein 4 (413 aa).

Residues S7 and S36 each carry the phosphoserine modification. A coiled-coil region spans residues 40–64; that stretch reads DILREAERRRQQQLQRKRRDEAAAA. Residues 42–206 are disordered; it reads LREAERRRQQ…RGGPGNRVFD (165 aa). Positions 62 to 82 are enriched in low complexity; that stretch reads AAAAGAGPRGGRSPAGASGHR. R70 carries the omega-N-methylarginine modification. S74 is modified (phosphoserine). Residues 87–97 are compositionally biased toward basic and acidic residues; the sequence is GRRESQKERKS. Residue S108 is modified to Phosphoserine. Basic and acidic residues predominate over residues 139-182; the sequence is MLERAERRSYREYRPYETERQADFTAEKFPDEKPGDRFDRDRPL. Residues 184-201 are compositionally biased toward gly residues; it reads GRGGPRGGMRGRGRGGPG. Residues K213 and K276 each participate in a glycyl lysine isopeptide (Lys-Gly) (interchain with G-Cter in SUMO1); alternate cross-link. Glycyl lysine isopeptide (Lys-Gly) (interchain with G-Cter in SUMO2); alternate cross-links involve residues K213 and K276. Residues 227-320 form a disordered region; that stretch reads VRTEDNMGGC…IRKPESTVPS (94 aa). The span at 294–315 shows a compositional bias: basic and acidic residues; that stretch reads DEWKNLQEQTRPKPEFNIRKPE. K336 participates in a covalent cross-link: Glycyl lysine isopeptide (Lys-Gly) (interchain with G-Cter in SUMO1); alternate. K336 is covalently cross-linked (Glycyl lysine isopeptide (Lys-Gly) (interchain with G-Cter in SUMO2); alternate). T354 and T375 each carry phosphothreonine; by PKC. The tract at residues 360-413 is disordered; the sequence is NFGNLPRPGRGARGGTRGGRGRIRRAENYGPRAEVVMQDVAPNPDDPEDFPALS. Residues 404–413 are compositionally biased toward acidic residues; sequence DDPEDFPALS.

Belongs to the SERBP1-HABP4 family. Associates with ribosomes; promoting ribosome stabilization. Interacts with EEF2/eEF2; promoting ribosome stabilization. Interacts with FMR1. Interacts with FXR1 and FXR2. Interacts with CHD3 (via C-terminus). Interacts (via C-terminus) with RACK1. Interacts with p53/TP53. Interacts (via N-terminus) with SRSF9; this interaction is direct. Interacts with SYNCRIP; this interaction is direct. Interacts with MEF2C (via N-terminus); this interaction decreases DNA-binding activity of MEF2C in myocardial cells in response to mechanical stress. Interacts with PRMT1 (via N-terminus). Interacts with SPIN1. In terms of processing, methylated. Methylation is decreased by phorbol 12-myristate 13-acetate (PMA)-activated PKC, in vitro. Phosphorylated by phorbol 12-myristate 13-acetate (PMA)-activated PKC isoforms at Thr-354 and Thr-375. Highly expressed in brain, heart, and kidney, and moderately expressed in skeletal muscle. Also expressed in a variety of tumor cell lines and in activated but not resting leukocytes.

It is found in the nucleus. It localises to the cytoplasm. The protein localises to the stress granule. The protein resides in the sarcoplasm. Its subcellular location is the nuclear body. It is found in the nucleolus. It localises to the nucleus speckle. The protein localises to the cajal body. The protein resides in the gem. In terms of biological role, ribosome-binding protein that promotes ribosome hibernation, a process during which ribosomes are stabilized in an inactive state and preserved from proteasomal degradation. Acts via its association with EEF2/eEF2 factor at the A-site of the ribosome, promoting ribosome stabilization in an inactive state compatible with storage. Plays a key role in ribosome hibernation in the mature oocyte by promoting ribosome stabilization. Ribosomes, which are produced in large quantities during oogenesis, are stored and translationally repressed in the oocyte and early embryo. Also binds RNA, regulating transcription and pre-mRNA splicing. Binds (via C-terminus) to poly(U) RNA. Seems to play a role in PML-nuclear bodies formation. Negatively regulates DNA-binding activity of the transcription factor MEF2C in myocardial cells in response to mechanical stress. The polypeptide is Intracellular hyaluronan-binding protein 4 (Homo sapiens (Human)).